We begin with the raw amino-acid sequence, 375 residues long: Tyrosine--tRNA ligase (375 aa).

Positions 37, 168, 172, 175, and 190 each coordinate L-tyrosine. Residues 251-255 (KMSKS) carry the 'KMSKS' region motif. Lysine 254 contacts ATP.

Belongs to the class-I aminoacyl-tRNA synthetase family. TyrS type 4 subfamily. Homodimer.

It localises to the cytoplasm. It catalyses the reaction tRNA(Tyr) + L-tyrosine + ATP = L-tyrosyl-tRNA(Tyr) + AMP + diphosphate + H(+). Functionally, catalyzes the attachment of tyrosine to tRNA(Tyr) in a two-step reaction: tyrosine is first activated by ATP to form Tyr-AMP and then transferred to the acceptor end of tRNA(Tyr). In Thermococcus onnurineus (strain NA1), this protein is Tyrosine--tRNA ligase.